Here is a 352-residue protein sequence, read N- to C-terminus: Keratocan (352 aa).

A signal peptide spans 1-20 (MAGTICFIMWVLFITDTVWS). The region spanning 33 to 71 (DDWTIHDFECPMECFCPPSFPTALYCENRGLKEIPAIPS) is the LRRNT domain. Intrachain disulfides connect Cys42–Cys48 and Cys46–Cys58. LRR repeat units lie at residues 72–93 (RIWY…PFEN), 96–117 (QLRW…KGAL), 122–142 (KLLF…PLPR), 143–164 (SLEQ…TFSN), 167–180 (NLTL…KLVD), 193–213 (NLMQ…RLPA), 214–235 (NTMQ…YFNV), 238–258 (KVAF…PSRG), 263–282 (SILD…RISA), and 283–304 (HLQH…VICP). A glycan (N-linked (GlcNAc...) (keratan sulfate) asparagine) is linked at Asn93. N-linked (GlcNAc...) (keratan sulfate) asparagine glycosylation occurs at Asn167. N-linked (GlcNAc...) asparagine glycosylation occurs at Asn222. A glycan (N-linked (GlcNAc...) asparagine) is linked at Asn298. Residues Cys303 and Cys343 are joined by a disulfide bond.

Belongs to the small leucine-rich proteoglycan (SLRP) family. SLRP class II subfamily. Binds keratan sulfate chains. As to expression, cornea (at protein level). Increased expression in the stroma of keratoconus corneas. Also detected in trachea, and in low levels, in intestine, skeletal muscle, ovary, lung and putamen.

Its subcellular location is the secreted. The protein resides in the extracellular space. The protein localises to the extracellular matrix. Functionally, may be important in developing and maintaining corneal transparency and for the structure of the stromal matrix. This Homo sapiens (Human) protein is Keratocan (KERA).